Here is a 436-residue protein sequence, read N- to C-terminus: 3-ketoacyl-CoA thiolase (436 aa).

Residue cysteine 99 is the Acyl-thioester intermediate of the active site. Active-site proton acceptor residues include histidine 392 and cysteine 422.

This sequence belongs to the thiolase-like superfamily. Thiolase family. In terms of assembly, heterotetramer of two alpha chains (FadJ) and two beta chains (FadI).

The protein localises to the cytoplasm. The enzyme catalyses an acyl-CoA + acetyl-CoA = a 3-oxoacyl-CoA + CoA. The protein operates within lipid metabolism; fatty acid beta-oxidation. Its function is as follows. Catalyzes the final step of fatty acid oxidation in which acetyl-CoA is released and the CoA ester of a fatty acid two carbons shorter is formed. This chain is 3-ketoacyl-CoA thiolase, found in Escherichia coli O81 (strain ED1a).